The following is a 259-amino-acid chain: uncharacterized protein (259 aa).

The region spanning 4-248 is the ABC transporter domain; that stretch reads LQTTNLSKTY…SILDTLSVLG (245 aa). 42-49 contacts ATP; sequence GPSGSGKT.

The protein belongs to the ABC transporter superfamily.

This is an uncharacterized protein from Bacillus subtilis (strain 168).